The sequence spans 216 residues: Large ribosomal subunit protein uL3 (216 aa).

The residue at position 157 (Q157) is an N5-methylglutamine.

It belongs to the universal ribosomal protein uL3 family. As to quaternary structure, part of the 50S ribosomal subunit. Forms a cluster with proteins L14 and L19. Post-translationally, methylated by PrmB.

One of the primary rRNA binding proteins, it binds directly near the 3'-end of the 23S rRNA, where it nucleates assembly of the 50S subunit. The chain is Large ribosomal subunit protein uL3 from Xanthomonas axonopodis pv. citri (strain 306).